A 183-amino-acid polypeptide reads, in one-letter code: uncharacterized protein (183 aa).

Residues 105–149 show a composition bias toward low complexity; it reads YNTNNSNTNTNYNNNNNNNNNNNNNNNNNNNKNNNNNNNNNNSNS. The interval 105-151 is disordered; it reads YNTNNSNTNTNYNNNNNNNNNNNNNNNNNNNKNNNNNNNNNNSNSKI.

This is an uncharacterized protein from Dictyostelium discoideum (Social amoeba).